The primary structure comprises 150 residues: UPF0178 protein AHA_0543 (150 aa).

Belongs to the UPF0178 family.

This Aeromonas hydrophila subsp. hydrophila (strain ATCC 7966 / DSM 30187 / BCRC 13018 / CCUG 14551 / JCM 1027 / KCTC 2358 / NCIMB 9240 / NCTC 8049) protein is UPF0178 protein AHA_0543.